The chain runs to 467 residues: Protein arginine methyltransferase NDUFAF7 homolog, mitochondrial (467 aa).

Belongs to the NDUFAF7 family.

The protein resides in the mitochondrion. It catalyses the reaction L-arginyl-[protein] + 2 S-adenosyl-L-methionine = N(omega),N(omega)'-dimethyl-L-arginyl-[protein] + 2 S-adenosyl-L-homocysteine + 2 H(+). In terms of biological role, arginine methyltransferase involved in the assembly or stability of mitochondrial NADH:ubiquinone oxidoreductase complex (complex I). This is Protein arginine methyltransferase NDUFAF7 homolog, mitochondrial from Schizosaccharomyces pombe (strain 972 / ATCC 24843) (Fission yeast).